Here is a 256-residue protein sequence, read N- to C-terminus: tRNA pseudouridine synthase A (256 aa).

Asp-55 functions as the Nucleophile in the catalytic mechanism. Residue Tyr-113 participates in substrate binding.

The protein belongs to the tRNA pseudouridine synthase TruA family. As to quaternary structure, homodimer.

The enzyme catalyses uridine(38/39/40) in tRNA = pseudouridine(38/39/40) in tRNA. Formation of pseudouridine at positions 38, 39 and 40 in the anticodon stem and loop of transfer RNAs. This is tRNA pseudouridine synthase A from Ligilactobacillus salivarius (strain UCC118) (Lactobacillus salivarius).